The primary structure comprises 129 residues: Large ribosomal subunit protein uL22 (129 aa).

Belongs to the universal ribosomal protein uL22 family. Part of the 50S ribosomal subunit.

Functionally, this protein binds specifically to 23S rRNA; its binding is stimulated by other ribosomal proteins, e.g. L4, L17, and L20. It is important during the early stages of 50S assembly. It makes multiple contacts with different domains of the 23S rRNA in the assembled 50S subunit and ribosome. The globular domain of the protein is located near the polypeptide exit tunnel on the outside of the subunit, while an extended beta-hairpin is found that lines the wall of the exit tunnel in the center of the 70S ribosome. This Brucella abortus (strain 2308) protein is Large ribosomal subunit protein uL22.